Consider the following 289-residue polypeptide: BTB/POZ domain-containing protein KCTD7 (289 aa).

The interval 1–40 is disordered; that stretch reads MVVVTGREPDSRRPDGAMSSSDAEDDFLEPATPTATQAGH. One can recognise a BTB domain in the interval 53-141; the sequence is VPLNIGGAHF…YAIGPLLEQL (89 aa).

As to quaternary structure, interacts with CUL3.

It is found in the cell membrane. It localises to the cytoplasm. Its subcellular location is the cytosol. May be involved in the control of excitability of cortical neurons. The protein is BTB/POZ domain-containing protein KCTD7 (KCTD7) of Bos taurus (Bovine).